The following is a 554-amino-acid chain: Folate synthesis bifunctional protein, mitochondrial (554 aa).

The transit peptide at 1-42 directs the protein to the mitochondrion; the sequence is MAPLLSQTLIHTGRFLLRRFLEPPPAVISAVAASRVCFHRYY. The HPPK stretch occupies residues 90–215; it reads VIALGSNIGN…SFVLAPLVDL (126 aa). Residues 273–541 enclose the Pterin-binding domain; it reads THVMGILNLT…NVRHNADAAK (269 aa). The DHPS stretch occupies residues 275–554; sequence VMGILNLTPD…AMLRRRRSKG (280 aa). Residue N280 participates in Mg(2+) binding. Residues T320, D357, N376, D449, K494, and 529–531 each bind (7,8-dihydropterin-6-yl)methyl diphosphate; that span reads RVH.

It in the N-terminal section; belongs to the HPPK family. This sequence in the C-terminal section; belongs to the DHPS family. Mg(2+) is required as a cofactor. In terms of tissue distribution, ubiquitous.

The protein localises to the mitochondrion. It catalyses the reaction 6-hydroxymethyl-7,8-dihydropterin + ATP = (7,8-dihydropterin-6-yl)methyl diphosphate + AMP + H(+). The catalysed reaction is (7,8-dihydropterin-6-yl)methyl diphosphate + 4-aminobenzoate = 7,8-dihydropteroate + diphosphate. It functions in the pathway cofactor biosynthesis; tetrahydrofolate biosynthesis; 2-amino-4-hydroxy-6-hydroxymethyl-7,8-dihydropteridine diphosphate from 7,8-dihydroneopterin triphosphate: step 4/4. The protein operates within cofactor biosynthesis; tetrahydrofolate biosynthesis; 7,8-dihydrofolate from 2-amino-4-hydroxy-6-hydroxymethyl-7,8-dihydropteridine diphosphate and 4-aminobenzoate: step 1/2. Functionally, catalyzes the first two consecutive steps of tetrahydrofolate biosynthesis. In Arabidopsis thaliana (Mouse-ear cress), this protein is Folate synthesis bifunctional protein, mitochondrial.